A 132-amino-acid polypeptide reads, in one-letter code: Sodium/calcium exchanger regulatory protein 1 (132 aa).

(9Z)-hexadecenoate contacts are provided by Arg-126 and Tyr-128.

Belongs to the calycin superfamily. Fatty-acid binding protein (FABP) family. As to quaternary structure, interacts with Na(+)/Ca(2+) exchanger NCXSQ1; ReP1-NCXSQ phosphorylation does not affect the interaction. In terms of processing, phosphorylated. Phosphorylation may result in the release of the bound fatty acid. As to expression, expressed in the optic nerve (at protein level).

The protein resides in the cytoplasm. It localises to the membrane. Functionally, binds and may transport fatty acids such as palmitoleate. Also binds poly-phosphoinositides including phosphatidylinositol 4-phosphate (PtdIns(4)P), phosphatidylinositol 4,5-bisphosphate (PtdIns(4,5)P2) and phosphatidylinositol 3,4,5-trisphosphate (PtdIns(3,4,5)P3), and phosphatidic acid. When phosphorylated, stimulates the activity of optic nerve Na(+)/Ca(2+) exchanger. The chain is Sodium/calcium exchanger regulatory protein 1 from Doryteuthis pealeii (Longfin inshore squid).